A 344-amino-acid chain; its full sequence is Follistatin (344 aa).

The first 29 residues, 1 to 29 (MVCARHQPGGLCLLLLLLCQFMEDRSAQA), serve as a signal peptide directing secretion. The region spanning 30–103 (GNCWLRQAKN…TCENVDCGPG (74 aa)) is the TB domain. Intrachain disulfides connect cysteine 32/cysteine 55, cysteine 42/cysteine 88, cysteine 56/cysteine 91, cysteine 95/cysteine 106, cysteine 100/cysteine 116, cysteine 118/cysteine 150, cysteine 122/cysteine 143, cysteine 132/cysteine 164, cysteine 168/cysteine 179, cysteine 173/cysteine 189, cysteine 192/cysteine 225, cysteine 196/cysteine 218, cysteine 207/cysteine 239, cysteine 245/cysteine 256, cysteine 250/cysteine 267, cysteine 270/cysteine 302, cysteine 274/cysteine 295, and cysteine 284/cysteine 316. The Follistatin-like 1 domain maps to 94–117 (TCENVDCGPGKKCRMNKKNKPRCV). The Kazal-like 1 domain occupies 112–166 (NKPRCVCAPDCSNITWKGPVCGLDGKTYRNECALLKARCKEQPELEVQYQGKCKK). Asparagine 124 carries N-linked (GlcNAc...) asparagine glycosylation. One can recognise a Follistatin-like 2 domain in the interval 167–190 (TCRDVFCPGSSTCVVDQTNNAYCV). A Kazal-like 2 domain is found at 186 to 241 (NAYCVTCNRICPEPSSSEQYLCGNDGVTYSSACHLRKATCLLGRSIGLAYEGKCIK). One can recognise a Follistatin-like 3 domain in the interval 244–268 (SCEDIQCGGGKKCLWDSKVGRGRCS). The Kazal-like 3 domain maps to 264–318 (RGRCSLCDELCPDSKSDEPVCASDNATYASECAMKEAACSSGVLLEVKHSGSCNS). N-linked (GlcNAc...) asparagine glycosylation occurs at asparagine 288. The segment at 315–344 (SCNSISEETEEEEEEEDQDYSFPISSILEW) is disordered. The span at 321-333 (EETEEEEEEEDQD) shows a compositional bias: acidic residues.

As to quaternary structure, interacts with GDF11. Interacts with activin A/INHBA. Interacts with myostatin/MSTN.

The protein resides in the secreted. Its subcellular location is the nucleus. It localises to the nucleolus. Functionally, multifunctional regulatory protein whose primary function is to antagonize members of the transforming growth factor beta (TGF-beta) superfamily including activin, myostatin, GDF11 or bone morphogenetic proteins (BMPs). Mechanistically, binds to these ligands in the extracellular space, blocking their type II receptor-binding site to inhibit downstream signaling. Plays an essential role in muscle fiber formation and growth both by preventing the repressive effects of myostatin and through SMAD3/AKT/mTOR signaling independently of myostatin. Also promotes neural differentiation by antagonizing the action BMP4. Acts as a specific inhibitor of the biosynthesis and secretion of pituitary follicle stimulating hormone (FSH) by sequestering activin A/INHBA. On the other hand, translocates into the nucleus where it down-regulates rRNA synthesis and ribosome biogenesis to maintain cellular energy homeostasis by binding to rDNA. The chain is Follistatin from Mus musculus (Mouse).